Here is a 127-residue protein sequence, read N- to C-terminus: Large ribosomal subunit protein bL19 (127 aa).

It belongs to the bacterial ribosomal protein bL19 family.

This protein is located at the 30S-50S ribosomal subunit interface and may play a role in the structure and function of the aminoacyl-tRNA binding site. This Paraburkholderia phymatum (strain DSM 17167 / CIP 108236 / LMG 21445 / STM815) (Burkholderia phymatum) protein is Large ribosomal subunit protein bL19.